The primary structure comprises 552 residues: Hyaluronan synthase 2 (552 aa).

At 1 to 11 the chain is on the cytoplasmic side; sequence MHCERFLCILR. Residues 12 to 32 traverse the membrane as a helical segment; it reads IIGTTLFGVSLLLGITAAYIV. The Extracellular segment spans residues 33 to 45; it reads GYQFIQTDNYYFS. The helical transmembrane segment at 46–66 threads the bilayer; sequence FGLYGAFLASHLIIQSLFAFL. The Cytoplasmic portion of the chain corresponds to 67-374; it reads EHRKMKKSLE…NAMWFHKHHL (308 aa). Residue threonine 110 is modified to Phosphothreonine. Lysine 190 is covalently cross-linked (Glycyl lysine isopeptide (Lys-Gly) (interchain with G-Cter in ubiquitin)). Residue serine 221 is glycosylated (O-linked (GlcNAc) serine). Position 328 is a phosphothreonine (threonine 328). The helical transmembrane segment at 375–395 threads the bilayer; sequence WMTYEAVITGFFPFFLIATVI. Over 396–402 the chain is Extracellular; the sequence is QLFYRGK. Residues 403–423 traverse the membrane as a helical segment; that stretch reads IWNILLFLLTVQLVGLIKSSF. Residues 424–429 are Cytoplasmic-facing; it reads ASCLRG. Residues 430–450 form a helical membrane-spanning segment; that stretch reads NIVMVFMSLYSVLYMSSLLPA. The Extracellular portion of the chain corresponds to 451–475; it reads KMFAIATINKAGWGTSGRKTIVVNF. Residues 476-496 traverse the membrane as a helical segment; sequence IGLIPVSVWFTILLGGVIFTI. Residues 497-510 are Cytoplasmic-facing; sequence YKESKKPFSESKQT. Residues 511-531 traverse the membrane as a helical segment; that stretch reads VLIVGTLLYACYWVMLLTLYV. The Extracellular portion of the chain corresponds to 532-552; sequence VLINKCGRRKKGQQYDMVLDV.

Belongs to the NodC/HAS family. As to quaternary structure, homodimer; dimerization promotes enzymatic activity. Forms heterodimer with HAS3. Forms heterodimer with HAS1. It depends on Mg(2+) as a cofactor. In terms of processing, phosphorylation at Thr-328 is essential for hyaluronan synthase activity. Post-translationally, O-GlcNAcylation at Ser-221 increases the stability of HAS2 and plasma membrane localization. Ubiquitination at Lys-190; this ubiquitination is essential for hyaluronan synthase activity and homo- or hetero-oligomerization. Can also be poly-ubiquitinated. Deubiquitinated by USP17L22/USP17 and USP4. USP17L22/USP17 efficiently removes 'Lys-63'- and 'Lys-48'-linked polyubiquitin chains, whereas USP4 preferentially removes monoubiquitination and, partially, both 'Lys-63'- and 'Lys-48'-linked polyubiquitin chain. Overexpressed in skin fibroblasts.

It localises to the cell membrane. The protein localises to the endoplasmic reticulum membrane. The protein resides in the vesicle. Its subcellular location is the golgi apparatus membrane. It is found in the lysosome. It catalyses the reaction [hyaluronan](n) + UDP-N-acetyl-alpha-D-glucosamine = N-acetyl-beta-D-glucosaminyl-(1-&gt;4)-[hyaluronan](n) + UDP + H(+). The catalysed reaction is N-acetyl-beta-D-glucosaminyl-(1-&gt;4)-[hyaluronan](n) + UDP-alpha-D-glucuronate = [hyaluronan](n+1) + UDP + H(+). Its pathway is glycan biosynthesis; hyaluronan biosynthesis. Catalyzes the addition of GlcNAc or GlcUA monosaccharides to the nascent hyaluronan polymer. Therefore, it is essential to hyaluronan synthesis a major component of most extracellular matrices that has a structural role in tissues architectures and regulates cell adhesion, migration and differentiation. This is one of three isoenzymes responsible for cellular hyaluronan synthesis and it is particularly responsible for the synthesis of high molecular mass hyaluronan. In Heterocephalus glaber (Naked mole rat), this protein is Hyaluronan synthase 2 (Has2).